A 317-amino-acid chain; its full sequence is Protoheme IX farnesyltransferase (317 aa).

The next 6 helical transmembrane spans lie at 25 to 45 (FFALLKPRVMALVVFTALVGM), 54 to 74 (PVIGAVSLLMIAVGAGASGCL), 117 to 137 (LMLGLAANWLAAGLLAFTIVF), 167 to 189 (IGQAVVTGSVGIEGIILFLIIFI), 244 to 264 (LGFGGLIYGLVALLGGLAMLV), and 281 to 301 (AAMSLFGFSILYLFLLFSALL).

It belongs to the UbiA prenyltransferase family. Protoheme IX farnesyltransferase subfamily.

The protein localises to the cell inner membrane. The catalysed reaction is heme b + (2E,6E)-farnesyl diphosphate + H2O = Fe(II)-heme o + diphosphate. It functions in the pathway porphyrin-containing compound metabolism; heme O biosynthesis; heme O from protoheme: step 1/1. Its function is as follows. Converts heme B (protoheme IX) to heme O by substitution of the vinyl group on carbon 2 of heme B porphyrin ring with a hydroxyethyl farnesyl side group. The sequence is that of Protoheme IX farnesyltransferase from Methylobacterium nodulans (strain LMG 21967 / CNCM I-2342 / ORS 2060).